The following is a 370-amino-acid chain: Putative agmatine deiminase (370 aa).

Residue Cys-361 is the Amidino-cysteine intermediate of the active site.

This sequence belongs to the agmatine deiminase family.

It catalyses the reaction agmatine + H2O = N-carbamoylputrescine + NH4(+). This Shewanella baltica (strain OS185) protein is Putative agmatine deiminase.